Consider the following 739-residue polypeptide: MFDVQREELMWGDRKLVLETGKVARQADGAVIATYGETSVLATVVAAKEPKPGIDFMPLTVNYQERAYAAGRIPGGYFKREGRPSEKETLVSRLIDRPIRPLFIEGWRNDTQVVVTVLTHDLENDPDIVAMVAASAALTLSGVPFMGPIGGARVGYINGGYRLNPLVTETKEESSLDLVVAGTQDAVLMVESEAKELSEDVMLGAVMFGHKHFQPVIEAIIRLAEKAAKEPRDFKAPENADVEKAVLEVCEAELRAAYTKTVKQERYAAVDAVKAKVMAALCPEGAEKFPAEKVKAAFKEAQSKVVRWNILDSGARIDGRDVKTVRSILSEVGVLPRAHGSALFTRGETQALVVATLGTGEDEQFIDALEGTYKERFLLHYNFPPYSVGETGRMGSPGRREIGHGKLAWRAIRPVLPPAHEFPYTIRVVSEITESNGSSSMASVCGGSLSLMDAGVPLRRPVAGIAMGLILEGERFAVLSDILGDEDHLGDMDFKVAGTDEGVTSLQMDIKIAGITEEIMKIALAQAKDGRAHILAEMAKALTAARPELGEYAPRIETMQIPTDKIRDVIGTGGKVIREIVEKTGAKINIEDTGVVKIASADGKAIKAAYNWIRSIVAEPEVGVIYDGTIVKCMEFGAFVNFFGAKDGLVHISELAAQRVAKVQDVVKEGDKVKVKFLGQDDRGKIRLSMKVVDQQTGEDITDKIKAQRDAERAERGDEPREPREGGRHRGERRREAGE.

Residues Asp487 and Asp493 each contribute to the Mg(2+) site. The 60-residue stretch at Pro554–Ile613 folds into the KH domain. Residues Gly623 to Lys691 form the S1 motif domain. A disordered region spans residues Asp694–Glu739. Positions Ile701–Glu739 are enriched in basic and acidic residues.

This sequence belongs to the polyribonucleotide nucleotidyltransferase family. Mg(2+) serves as cofactor.

Its subcellular location is the cytoplasm. It catalyses the reaction RNA(n+1) + phosphate = RNA(n) + a ribonucleoside 5'-diphosphate. Involved in mRNA degradation. Catalyzes the phosphorolysis of single-stranded polyribonucleotides processively in the 3'- to 5'-direction. This Methylobacterium radiotolerans (strain ATCC 27329 / DSM 1819 / JCM 2831 / NBRC 15690 / NCIMB 10815 / 0-1) protein is Polyribonucleotide nucleotidyltransferase.